The following is a 607-amino-acid chain: MLPKLKISAFLLKRLERTKQQCSGCLFGVFYGEGTLLLLSFNIESSLGQLNYEQIQHRFPAELDLCGLVKFGGCTDGEAHLNEVIKSVDITDNPILLQCELGTLVGLRASFFVHGKLEEVPYEVMEAHQLYNDFCFTRLQCGFFLQTAATPESVAREMHVLRKRVADGNLVFNVPQTKIFINNYGPLDKQFSGDSQIQDLIDVIPTPGHEKETASVDKKKLKGQNTPVKRLAPTGCDYEVIPIDVMRSRSRDPVSGEPPHPALSIAVTNEEQIRVQVPLEIEAMAILCRKTKLQRLYDVLIESICRGLRLFELSLIEHLTESGSGKLLVPASYHFYPQEFGHFVSCAYLEGLSDDTPSMLMRRKRLHRQFALPISRPYFRRANQMLFLGETEDAPWTPLLNTHIGLRPSGVVDGKEYLVNGNYHYYHYLQQQVQDKGWGCAYRSLQTICSWFVLQGYTNAPIPTHLEVQEYLHKINDKPAAFVGSSQWIGSTEISMCLQGFLNVDSKILHVASGAELATIASELAMHFQTQGTPVMIGGGVLAHTIIGVDYCVQTGQVKFLILDPHYTGADDLATIQIKGWCGWKGMDFWAKGSYYNLCMPQRPILY.

Residues C440, D564, and H566 contribute to the active site.

This sequence belongs to the peptidase C78 family.

Its function is as follows. Thiol protease which recognizes and hydrolyzes the peptide bond at the C-terminal Gly of UFM1, a ubiquitin-like modifier protein bound to a number of target proteins. Does not hydrolyze SUMO1 or ISG15 ubiquitin-like proteins. This is Probable Ufm1-specific protease 2 from Drosophila melanogaster (Fruit fly).